The primary structure comprises 622 residues: Probable potassium transport system protein Kup 2 (622 aa).

12 helical membrane passes run 9–29 (LSGVTLAAIGVVYGDIGTSPL), 46–66 (PASILGFLSLIFWLLILVVSV), 99–119 (TPLLIILGLIGGSFFYGEVVI), 137–157 (PSLDPYIVPLSVLVLTLLFAI), 169–189 (FAPIMLTWFITLAVLGLNSIF), 213–233 (ASFFALGAVVLAITGVEALYA), 247–267 (WFMVVLPSLVLNYFGQGALLL), 285–305 (ALLPLLLLATLATVIASQAVI), 337–357 (IYIPVINWMLYISVVIVIMSF), 363–383 (LAAAYGIAVTGTMVLTSILSC), 396–416 (LVAALFVALLAIDVPLFAANL), and 419–439 (IFSGGWLPLTLGAVMFTVMTS).

It belongs to the HAK/KUP transporter (TC 2.A.72) family.

The protein resides in the cell inner membrane. It catalyses the reaction K(+)(in) + H(+)(in) = K(+)(out) + H(+)(out). In terms of biological role, transport of potassium into the cell. Likely operates as a K(+):H(+) symporter. This is Probable potassium transport system protein Kup 2 from Aeromonas hydrophila subsp. hydrophila (strain ATCC 7966 / DSM 30187 / BCRC 13018 / CCUG 14551 / JCM 1027 / KCTC 2358 / NCIMB 9240 / NCTC 8049).